The primary structure comprises 451 residues: MGKYFGTDGVRGEANVELTPELAFKLGRFGGYVLSQHETERPKVFVARDTRISGEMLESALIAGLLSVGIEVYKLGVLATPGVSYLVRTEKASAGVMISASHNPALDNGIKFFGNDGFKLADDQELEIEALLDAPEDTLPRPSAEGLGTLVDYPEGLRKYEKFLVTTGTDLSGMTVALDTANGAASVSARDVFLDLNAEIAVIGEKPNGLNINDGVGSTHPEQLQELVKETGADLGLAFDGDSDRLIAVDETGEIVDGDRIMFIIGKYLSEKGLLAHNTIVTTVMSNLGFHKALDKQGINKAIAAVGDRYVVEEMRSSGYNLGGEQSGHVIIMDYNTTGDGQLTAIQLAKVMKETGKSLSELAAEVTIYPQKLVNIRVENSMKDRAMEVPAIANIIAKMEDEMAGNGRILVRPSGTEPLLRVMAEAPTDAKVDYYVDTIADVVRTEIGCDN.

The Phosphoserine intermediate role is filled by S101. Mg(2+) contacts are provided by S101, D240, D242, and D244. Position 101 is a phosphoserine (S101).

It belongs to the phosphohexose mutase family. Mg(2+) serves as cofactor. Post-translationally, activated by phosphorylation.

The catalysed reaction is alpha-D-glucosamine 1-phosphate = D-glucosamine 6-phosphate. In terms of biological role, catalyzes the conversion of glucosamine-6-phosphate to glucosamine-1-phosphate. The protein is Phosphoglucosamine mutase of Streptococcus pyogenes serotype M18 (strain MGAS8232).